The chain runs to 129 residues: uncharacterized protein (129 aa).

Low complexity predominate over residues 1-13; the sequence is MSDVAETVVAQEP. The tract at residues 1–129 is disordered; the sequence is MSDVAETVVA…SGDAPAVAAE (129 aa). A compositionally biased stretch (basic and acidic residues) spans 34-94; it reads IDEKTSEQNG…KRVSSAHEEA (61 aa). Positions 117–129 are enriched in low complexity; it reads VAASGDAPAVAAE.

This is an uncharacterized protein from Caenorhabditis elegans.